The chain runs to 555 residues: Membrane protein insertase YidC (555 aa).

Residues I7–Q24 traverse the membrane as a helical segment. Composition is skewed to low complexity over residues Q40–A54 and A64–G81. Residues Q40–G81 form a disordered region. 5 helical membrane passes run L334 to L354, F360 to F380, L430 to L450, L468 to Q488, and V503 to V523.

The protein belongs to the OXA1/ALB3/YidC family. Type 1 subfamily. In terms of assembly, interacts with the Sec translocase complex via SecD. Specifically interacts with transmembrane segments of nascent integral membrane proteins during membrane integration.

Its subcellular location is the cell inner membrane. Its function is as follows. Required for the insertion and/or proper folding and/or complex formation of integral membrane proteins into the membrane. Involved in integration of membrane proteins that insert both dependently and independently of the Sec translocase complex, as well as at least some lipoproteins. Aids folding of multispanning membrane proteins. The chain is Membrane protein insertase YidC from Cupriavidus metallidurans (strain ATCC 43123 / DSM 2839 / NBRC 102507 / CH34) (Ralstonia metallidurans).